Reading from the N-terminus, the 294-residue chain is Glycine--tRNA ligase alpha subunit (294 aa).

It belongs to the class-II aminoacyl-tRNA synthetase family. In terms of assembly, tetramer of two alpha and two beta subunits.

It is found in the cytoplasm. The enzyme catalyses tRNA(Gly) + glycine + ATP = glycyl-tRNA(Gly) + AMP + diphosphate. The polypeptide is Glycine--tRNA ligase alpha subunit (Oleidesulfovibrio alaskensis (strain ATCC BAA-1058 / DSM 17464 / G20) (Desulfovibrio alaskensis)).